We begin with the raw amino-acid sequence, 106 residues long: UPF0060 membrane protein Rleg2_1018 (106 aa).

4 helical membrane passes run 4 to 24 (IIYA…WAWL), 30 to 50 (VWWL…LTLV), 58 to 78 (TFAA…WLVE), and 86 to 106 (DIGG…GPRG).

The protein belongs to the UPF0060 family.

The protein resides in the cell inner membrane. The protein is UPF0060 membrane protein Rleg2_1018 of Rhizobium leguminosarum bv. trifolii (strain WSM2304).